A 108-amino-acid polypeptide reads, in one-letter code: Synaptobrevin-1 (108 aa).

Residues 1-25 (MDAQGDAGAQGGSQGPRPSNKRLQQ) are disordered. Over 1 to 85 (MDAQGDAGAQ…KRKYWWKNIK (85 aa)) the chain is Cytoplasmic. A v-SNARE coiled-coil homology domain is found at 22 to 82 (RLQQTQAQVD…ATLKRKYWWK (61 aa)). A helical; Anchor for type IV membrane protein membrane pass occupies residues 86–106 (MMIIMCAIVVILIIIIVLWAG). Residues 107–108 (GK) lie on the Extracellular side of the membrane.

The protein belongs to the synaptobrevin family. In terms of assembly, part of the SNARE core complex containing CBG09569/SNAP25, snb-1/VAMP2 and CBG03570/STX1A. This complex binds to cpx-1/CPLX1.

It is found in the cytoplasmic vesicle. It localises to the secretory vesicle. The protein localises to the synaptic vesicle membrane. Its subcellular location is the cell membrane. The protein resides in the synapse. It is found in the synaptosome. In terms of biological role, involved in the targeting and/or fusion of transport vesicles to their target membrane. Acts in neuronal exocytosis of synaptic transmission. Likely to have a role in cholinergic transmisson. Required for viability, coordinated movement and M3 pharynx motor neuron function. This is Synaptobrevin-1 from Caenorhabditis briggsae.